A 721-amino-acid polypeptide reads, in one-letter code: DNA ligase (721 aa).

NAD(+)-binding positions include 42–46, 91–92, and glutamate 125; these read DAEYD and SL. Lysine 127 acts as the N6-AMP-lysine intermediate in catalysis. NAD(+)-binding residues include arginine 148, glutamate 184, lysine 300, and lysine 324. Cysteine 430, cysteine 433, cysteine 448, and cysteine 454 together coordinate Zn(2+). The 80-residue stretch at 642–721 folds into the BRCT domain; that stretch reads STGSPVEGKT…DAWFTLVGEE (80 aa).

This sequence belongs to the NAD-dependent DNA ligase family. LigA subfamily. It depends on Mg(2+) as a cofactor. Requires Mn(2+) as cofactor.

The catalysed reaction is NAD(+) + (deoxyribonucleotide)n-3'-hydroxyl + 5'-phospho-(deoxyribonucleotide)m = (deoxyribonucleotide)n+m + AMP + beta-nicotinamide D-nucleotide.. DNA ligase that catalyzes the formation of phosphodiester linkages between 5'-phosphoryl and 3'-hydroxyl groups in double-stranded DNA using NAD as a coenzyme and as the energy source for the reaction. It is essential for DNA replication and repair of damaged DNA. The protein is DNA ligase of Brucella anthropi (strain ATCC 49188 / DSM 6882 / CCUG 24695 / JCM 21032 / LMG 3331 / NBRC 15819 / NCTC 12168 / Alc 37) (Ochrobactrum anthropi).